Reading from the N-terminus, the 213-residue chain is Probable GTP-binding protein EngB (213 aa).

The region spanning 30–204 (EGFEVAFAGR…YTVLAGWMEL (175 aa)) is the EngB-type G domain. GTP-binding positions include 38 to 45 (GRSNAGKS), 64 to 68 (GRTQL), 82 to 85 (DLPG), 149 to 152 (TKAD), and 182 to 185 (LFSA). The Mg(2+) site is built by S45 and T66.

It belongs to the TRAFAC class TrmE-Era-EngA-EngB-Septin-like GTPase superfamily. EngB GTPase family. Requires Mg(2+) as cofactor.

In terms of biological role, necessary for normal cell division and for the maintenance of normal septation. The chain is Probable GTP-binding protein EngB from Pseudomonas fluorescens (strain ATCC BAA-477 / NRRL B-23932 / Pf-5).